The primary structure comprises 289 residues: Oxaloacetate decarboxylase (289 aa).

Serine 50 contacts substrate. Residue aspartate 88 participates in Mg(2+) binding. Substrate is bound by residues arginine 159 and histidine 235.

The protein belongs to the isocitrate lyase/PEP mutase superfamily. Oxaloacetate decarboxylase family. In terms of assembly, homotetramer; dimer of dimers. Mg(2+) is required as a cofactor.

The catalysed reaction is oxaloacetate + H(+) = pyruvate + CO2. In terms of biological role, catalyzes the decarboxylation of oxaloacetate into pyruvate. Seems to play a role in maintaining cellular concentrations of bicarbonate and pyruvate. This chain is Oxaloacetate decarboxylase, found in Pseudomonas putida (strain ATCC 47054 / DSM 6125 / CFBP 8728 / NCIMB 11950 / KT2440).